The following is a 616-amino-acid chain: DNA-binding protein RFX5 (616 aa).

The disordered stretch occupies residues 1 to 29; that stretch reads MAEDEPDAKSPKTGGRAPPGGAEAGEPTT. At Ala2 the chain carries N-acetylalanine. Ser10 bears the Phosphoserine mark. The segment covering 13-29 has biased composition (low complexity); that stretch reads TGGRAPPGGAEAGEPTT. Residues 25–90 are N-terminal domain; sequence GEPTTLLQRL…PSTLSNEEYM (66 aa). A leucine-rich region; critical for dimer formation and for interaction with RFXAP region spans residues 62 to 66; that stretch reads LYLYL. The segment at residues 92 to 168 is a DNA-binding region (RFX-type winged-helix); it reads AYRWIRNHLE…YCYSGIRRKT (77 aa). Positions 173 to 178 match the PxLPxI/L motif; mediates interaction with RFXANK motif; the sequence is PPLPGL. Residue Ser185 is modified to Phosphoserine. Disordered stretches follow at residues 252–314 and 391–616; these read AEED…ESSA and LPGP…ATPP. Residues 276–293 are compositionally biased toward basic and acidic residues; the sequence is GAHKKPERLAQPPKDLEA. Residues 391 to 401 show a composition bias toward pro residues; sequence LPGPGPGPGRA. The segment covering 424 to 434 has biased composition (basic and acidic residues); sequence GPHDKGVKRTA. Residues 463–473 show a composition bias toward basic residues; that stretch reads KRKRGRPRKKS. A compositionally biased stretch (gly residues) spans 534-546; the sequence is QGDGTVSKGGRGP. The span at 606 to 616 shows a compositional bias: basic and acidic residues; it reads QEHKDPKATPP.

The protein belongs to the RFX family. In terms of assembly, homodimer. The RFX heterotetrameric complex consists of 2 molecules of RFX5 and one each of RFXAP and RFX-B/RFXANK; with each subunit representing a separate complementation group. Interacts (via PxLPxI/L motif) with RFXANK (via ankyrin repeats); the interaction is direct. RFX forms cooperative DNA binding complexes with X2BP and CBF/NF-Y. RFX associates with CIITA to form an active transcriptional complex. Phosphorylated. As to expression, ubiquitous.

The protein resides in the nucleus. Its function is as follows. Activates transcription from class II MHC promoters. Recognizes X-boxes. Mediates cooperative binding between RFX and NF-Y. RFX binds the X1 box of MHC-II promoters. The polypeptide is DNA-binding protein RFX5 (RFX5) (Homo sapiens (Human)).